The following is a 73-amino-acid chain: Omega-conotoxin GVIA (73 aa).

A signal peptide spans M1 to A22. Positions D23–R45 are excised as a propeptide. Disulfide bonds link C46–C61, C53–C64, and C60–C71. P49, P55, and P66 each carry 4-hydroxyproline. Y72 is modified (tyrosine amide; in form omega-conotoxin GVIA).

The protein belongs to the conotoxin O1 superfamily. As to expression, expressed by the venom duct.

The protein resides in the secreted. Functionally, omega-conotoxins act at presynaptic membranes, they bind and block voltage-gated calcium channels (Cav). This toxin blocks N-type calcium channels (Cav2.2/CACNA1B) with a high potency (it displaces [125I]GVIA with an IC(50)=3.7-38 pM). In Conus geographus (Geography cone), this protein is Omega-conotoxin GVIA.